An 87-amino-acid polypeptide reads, in one-letter code: Omega-lycotoxin-Am1b (87 aa).

Positions 1 to 17 (MKLSIFFVLFFIAIAYC) are cleaved as a signal peptide. A propeptide spanning residues 18-40 (QPEFLDDEEDEVEETLPVAEEGR) is cleaved from the precursor. 4 disulfide bridges follow: cysteine 44–cysteine 59, cysteine 51–cysteine 64, cysteine 58–cysteine 84, and cysteine 66–cysteine 82.

The protein belongs to the neurotoxin omega-lctx family. In terms of tissue distribution, expressed by the venom gland.

The protein resides in the secreted. In terms of biological role, modulates Cav2.1/CACNA1A voltage-gated calcium channels (P/Q-type currents) in rat cerebellar Purkinje cells and hippocampal CA1-CA3 neurons. At saturating concentrations (&gt;10 nM) decelerates activation kinetics and slightly increases peak amplitude without affecting deactivation kinetics. In vivo, does not cause death when intravenously injected into mice. In rat models, through its activity on Cav2.1/CACNA1A, has an ameliorative effect on memory defects provoked by hyperstimulation of N-methyl-D-aspartate receptors (NMDARs) in the hippocampus. This Alopecosa marikovskyi (Wolf spider) protein is Omega-lycotoxin-Am1b.